The following is a 241-amino-acid chain: Small ribosomal subunit protein uS2 (241 aa).

The protein belongs to the universal ribosomal protein uS2 family.

This chain is Small ribosomal subunit protein uS2, found in Escherichia coli O127:H6 (strain E2348/69 / EPEC).